Consider the following 87-residue polypeptide: HssA/B-like protein 28 (87 aa).

It belongs to the hssA/B family.

The polypeptide is HssA/B-like protein 28 (hssl28) (Dictyostelium discoideum (Social amoeba)).